Here is a 627-residue protein sequence, read N- to C-terminus: uncharacterized protein (627 aa).

Residues 1-20 show a composition bias toward basic and acidic residues; the sequence is MAKFKKDLTTKNKDTDRLSE. 2 disordered regions span residues 1-22 and 578-606; these read MAKF…SEEI and LSLG…LLPV. Over residues 582–592 the composition is skewed to acidic residues; the sequence is SEEEQGQEETE.

This is an uncharacterized protein from Rickettsia prowazekii (strain Madrid E).